Consider the following 1001-residue polypeptide: Kinesin-like protein KIN-14P (1001 aa).

The Calponin-homology (CH) domain maps to alanine 53–glutamate 172. A compositionally biased stretch (basic and acidic residues) spans asparagine 284 to serine 300. The tract at residues asparagine 284–glutamate 322 is disordered. A Kinesin motor domain is found at asparagine 426–valine 748. Glycine 509 to threonine 516 contacts ATP. Residues asparagine 756–glutamate 784 are a coiled coil. Disordered stretches follow at residues proline 804–arginine 830 and glutamate 890–lysine 1001. Residues proline 972 to leucine 984 show a composition bias toward polar residues.

Belongs to the TRAFAC class myosin-kinesin ATPase superfamily. Kinesin family. KIN-14 subfamily.

The chain is Kinesin-like protein KIN-14P from Oryza sativa subsp. japonica (Rice).